Consider the following 312-residue polypeptide: Ribosomal RNA small subunit methyltransferase H (312 aa).

S-adenosyl-L-methionine contacts are provided by residues 34–36 (AGH), D54, F81, D102, and Q109.

This sequence belongs to the methyltransferase superfamily. RsmH family.

The protein localises to the cytoplasm. The catalysed reaction is cytidine(1402) in 16S rRNA + S-adenosyl-L-methionine = N(4)-methylcytidine(1402) in 16S rRNA + S-adenosyl-L-homocysteine + H(+). In terms of biological role, specifically methylates the N4 position of cytidine in position 1402 (C1402) of 16S rRNA. The protein is Ribosomal RNA small subunit methyltransferase H of Citrifermentans bemidjiense (strain ATCC BAA-1014 / DSM 16622 / JCM 12645 / Bem) (Geobacter bemidjiensis).